The primary structure comprises 115 residues: Large ribosomal subunit protein bL19 (115 aa).

It belongs to the bacterial ribosomal protein bL19 family.

Functionally, this protein is located at the 30S-50S ribosomal subunit interface and may play a role in the structure and function of the aminoacyl-tRNA binding site. The sequence is that of Large ribosomal subunit protein bL19 from Desulforapulum autotrophicum (strain ATCC 43914 / DSM 3382 / VKM B-1955 / HRM2) (Desulfobacterium autotrophicum).